Here is a 162-residue protein sequence, read N- to C-terminus: Large ribosomal subunit protein bL17 (162 aa).

The interval 126–162 (ATAKKATRTRRSKKSAAATEAPAAPAAETTEEAPKAE) is disordered. Residues 130-139 (KATRTRRSKK) show a composition bias toward basic residues. Residues 140-153 (SAAATEAPAAPAAE) are compositionally biased toward low complexity.

It belongs to the bacterial ribosomal protein bL17 family. In terms of assembly, part of the 50S ribosomal subunit. Contacts protein L32.

This chain is Large ribosomal subunit protein bL17, found in Phocaeicola vulgatus (strain ATCC 8482 / DSM 1447 / JCM 5826 / CCUG 4940 / NBRC 14291 / NCTC 11154) (Bacteroides vulgatus).